We begin with the raw amino-acid sequence, 385 residues long: Carbamoyl phosphate synthase small chain (385 aa).

The tract at residues Met1–Gln185 is CPSase. Positions 47, 237, and 239 each coordinate L-glutamine. One can recognise a Glutamine amidotransferase type-1 domain in the interval Asn189–Ser376. Residue Cys265 is the Nucleophile of the active site. Residues Leu266, Gln269, Asn307, Gly309, and Phe310 each coordinate L-glutamine. Residues His349 and Glu351 contribute to the active site.

This sequence belongs to the CarA family. Composed of two chains; the small (or glutamine) chain promotes the hydrolysis of glutamine to ammonia, which is used by the large (or ammonia) chain to synthesize carbamoyl phosphate. Tetramer of heterodimers (alpha,beta)4.

The enzyme catalyses hydrogencarbonate + L-glutamine + 2 ATP + H2O = carbamoyl phosphate + L-glutamate + 2 ADP + phosphate + 2 H(+). The catalysed reaction is L-glutamine + H2O = L-glutamate + NH4(+). Its pathway is amino-acid biosynthesis; L-arginine biosynthesis; carbamoyl phosphate from bicarbonate: step 1/1. The protein operates within pyrimidine metabolism; UMP biosynthesis via de novo pathway; (S)-dihydroorotate from bicarbonate: step 1/3. Small subunit of the glutamine-dependent carbamoyl phosphate synthetase (CPSase). CPSase catalyzes the formation of carbamoyl phosphate from the ammonia moiety of glutamine, carbonate, and phosphate donated by ATP, constituting the first step of 2 biosynthetic pathways, one leading to arginine and/or urea and the other to pyrimidine nucleotides. The small subunit (glutamine amidotransferase) binds and cleaves glutamine to supply the large subunit with the substrate ammonia. This chain is Carbamoyl phosphate synthase small chain, found in Pasteurella multocida (strain Pm70).